Reading from the N-terminus, the 392-residue chain is Phosphoglycerate kinase (392 aa).

Substrate is bound by residues 21–23, arginine 36, 59–62, arginine 114, and arginine 147; these read DMN and HLGR. ATP-binding positions include lysine 198, glutamate 320, and 346-349; that span reads GGDT.

It belongs to the phosphoglycerate kinase family. In terms of assembly, monomer.

The protein resides in the cytoplasm. The enzyme catalyses (2R)-3-phosphoglycerate + ATP = (2R)-3-phospho-glyceroyl phosphate + ADP. It functions in the pathway carbohydrate degradation; glycolysis; pyruvate from D-glyceraldehyde 3-phosphate: step 2/5. The sequence is that of Phosphoglycerate kinase from Neisseria meningitidis serogroup C (strain 053442).